We begin with the raw amino-acid sequence, 246 residues long: 5-oxoprolinase subunit A (246 aa).

The protein belongs to the LamB/PxpA family. Forms a complex composed of PxpA, PxpB and PxpC.

The enzyme catalyses 5-oxo-L-proline + ATP + 2 H2O = L-glutamate + ADP + phosphate + H(+). Catalyzes the cleavage of 5-oxoproline to form L-glutamate coupled to the hydrolysis of ATP to ADP and inorganic phosphate. In Cupriavidus metallidurans (strain ATCC 43123 / DSM 2839 / NBRC 102507 / CH34) (Ralstonia metallidurans), this protein is 5-oxoprolinase subunit A.